Consider the following 337-residue polypeptide: Peptide methionine sulfoxide reductase MsrA/MsrB (337 aa).

The segment at 28–181 (KDIYLAGGCF…PGGYCHVDLS (154 aa)) is peptide methionine sulfoxide reductase A. Residue cysteine 36 is part of the active site. A MsrB domain is found at 198–321 (KDELKAKLSD…NGASLKFIPL (124 aa)). The active-site Nucleophile is the cysteine 310.

In the N-terminal section; belongs to the MsrA Met sulfoxide reductase family. It in the C-terminal section; belongs to the MsrB Met sulfoxide reductase family.

It carries out the reaction L-methionyl-[protein] + [thioredoxin]-disulfide + H2O = L-methionyl-(S)-S-oxide-[protein] + [thioredoxin]-dithiol. It catalyses the reaction [thioredoxin]-disulfide + L-methionine + H2O = L-methionine (S)-S-oxide + [thioredoxin]-dithiol. The enzyme catalyses L-methionyl-[protein] + [thioredoxin]-disulfide + H2O = L-methionyl-(R)-S-oxide-[protein] + [thioredoxin]-dithiol. Functionally, has an important function as a repair enzyme for proteins that have been inactivated by oxidation. Catalyzes the reversible oxidation-reduction of methionine sulfoxide in proteins to methionine. This chain is Peptide methionine sulfoxide reductase MsrA/MsrB (msrAB), found in Campylobacter fetus.